The primary structure comprises 86 residues: U2-sicaritoxin-Li1a (86 aa).

Positions 1-20 (MTFKLFVVVTLVLAIYVATA) are cleaved as a signal peptide. Residues 21–33 (EEAMKDDSEPAER) constitute a propeptide that is removed on maturation. Intrachain disulfides connect cysteine 35/cysteine 53, cysteine 42/cysteine 62, cysteine 52/cysteine 71, and cysteine 64/cysteine 69.

It belongs to the neurotoxin 39 family. Expressed by the venom gland.

It localises to the secreted. Its function is as follows. Toxin active against S.frugiperda larvae. May act on sodium channels (Nav). This is U2-sicaritoxin-Li1a from Loxosceles intermedia (Brown spider).